A 402-amino-acid polypeptide reads, in one-letter code: 1-deoxy-D-xylulose 5-phosphate reductoisomerase (402 aa).

Thr-27, Gly-28, Ser-29, Ile-30, Gly-53, Lys-54, Asn-55, and Asn-140 together coordinate NADPH. Lys-141 is a 1-deoxy-D-xylulose 5-phosphate binding site. Residue Glu-142 coordinates NADPH. Position 166 (Asp-166) interacts with Mn(2+). Ser-167, Glu-168, Ser-192, and His-215 together coordinate 1-deoxy-D-xylulose 5-phosphate. Mn(2+) is bound at residue Glu-168. Residue Gly-221 participates in NADPH binding. Ser-228, Asn-233, Lys-234, and Glu-237 together coordinate 1-deoxy-D-xylulose 5-phosphate. Residue Glu-237 coordinates Mn(2+).

It belongs to the DXR family. Mg(2+) is required as a cofactor. The cofactor is Mn(2+).

The enzyme catalyses 2-C-methyl-D-erythritol 4-phosphate + NADP(+) = 1-deoxy-D-xylulose 5-phosphate + NADPH + H(+). The protein operates within isoprenoid biosynthesis; isopentenyl diphosphate biosynthesis via DXP pathway; isopentenyl diphosphate from 1-deoxy-D-xylulose 5-phosphate: step 1/6. Its function is as follows. Catalyzes the NADPH-dependent rearrangement and reduction of 1-deoxy-D-xylulose-5-phosphate (DXP) to 2-C-methyl-D-erythritol 4-phosphate (MEP). This is 1-deoxy-D-xylulose 5-phosphate reductoisomerase from Lawsonia intracellularis (strain PHE/MN1-00).